Here is a 386-residue protein sequence, read N- to C-terminus: Benzoyl-CoA reductase subunit C (386 aa).

Belongs to the FldB/FldC dehydratase alpha/beta subunit family. Heterotetramer composed of A, B, C, and D subunits. The cofactor is iron-sulfur cluster. An oxidized flavin is required as a cofactor.

The enzyme catalyses cyclohexa-1,5-diene-1-carbonyl-CoA + oxidized 2[4Fe-4S]-[ferredoxin] + 2 ADP + 2 phosphate = reduced 2[4Fe-4S]-[ferredoxin] + benzoyl-CoA + 2 ATP + 2 H2O. The catalysed reaction is 3-hydroxybenzoyl-CoA + AH2 + 2 ATP + 2 H2O = 3-hydroxycyclohexa-1,5-diene-1-carbonyl-CoA + A + 2 ADP + 2 phosphate + 2 H(+). Its function is as follows. Catalyzes the anaerobic reduction of benzoyl-CoA and 3-hydroxybenzoyl-CoA to form cyclohexa-1,5-diene-1-carbonyl-CoA and 3-hydroxycyclohexa-1,5-diene-1-carbonyl-CoA, respectively. The enzyme also reduces other benzoyl-CoA analogs with small substituents at the aromatic ring. This Thauera aromatica protein is Benzoyl-CoA reductase subunit C (bcrC).